A 448-amino-acid chain; its full sequence is Antilisterial bacteriocin subtilosin biosynthesis protein AlbA (448 aa).

The region spanning 115–329 is the Radical SAM core domain; the sequence is FPMPLHATFE…EQHVIDEFKD (215 aa). Cysteine 129, cysteine 133, cysteine 136, cysteine 408, cysteine 414, and cysteine 417 together coordinate [4Fe-4S] cluster.

[4Fe-4S] cluster serves as cofactor.

The protein resides in the cytoplasm. In terms of biological role, catalyzes the formation of 3 thioether bonds during production of the sactipeptide subtilosin from SboA. In vitro the thioether bonds cannot be made in the absence of the SboA propeptide, suggesting this is the first reaction in subtilosin maturation. In vitro, in the absence of a second substrate, cleaves S-adenosyl-L-methionine into Met and 5'-dA. The polypeptide is Antilisterial bacteriocin subtilosin biosynthesis protein AlbA (albA) (Bacillus subtilis (strain 168)).